A 620-amino-acid polypeptide reads, in one-letter code: Aspartic protease 1 (620 aa).

Residues 1 to 110 are Cytoplasmic-facing; sequence MSPSSRFRNL…LGKAVGLSTS (110 aa). Positions 1–258 are excised as a propeptide; sequence MSPSSRFRNL…SKKDDGNLSG (258 aa). The important for proper cellular trafficking stretch occupies residues 27–31; the sequence is YASLL. A helical; Signal-anchor for type II membrane protein transmembrane segment spans residues 111–131; that stretch reads VICVVALFGIVCLCLYGLVNF. Residues 132-620 are Lumenal-facing; it reads SFTSVETSPL…KQIGFARLKN (489 aa). Positions 138-174 are disordered; it reads TSPLDDPRNSPVMGELGNPQASTPSSARADTPARHDR. Positions 156 to 165 are enriched in polar residues; sequence PQASTPSSAR. Positions 275-616 constitute a Peptidase A1 domain; sequence YYTEIYVGSP…DYDNKQIGFA (342 aa). Residues D293 and D476 contribute to the active site. Cysteines 513 and 550 form a disulfide.

This sequence belongs to the peptidase A1 family. Post-translationally, proteolytically cleaved into the soluble active mature form by, at least, cysteine protease CPL. Undergoes at least four processing steps; the first cleavage removes the propeptide resulting in the production of a soluble 45 kDa protein, which is further processed into a 35 kDa form followed by an additional processing into the final active 30 kDa form.

Its subcellular location is the membrane. It localises to the vacuole. Functionally, aspartyl protease which is dispensable for protein degradation in the vacuolar compartment (VAC) or for tachyzoite and bradyzoite viability. The sequence is that of Aspartic protease 1 from Toxoplasma gondii.